We begin with the raw amino-acid sequence, 199 residues long: Peroxynitrite isomerase (199 aa).

A GXWXGXG motif is present at residues 20-26; sequence GVWEGTG. His-190 lines the heme b pocket.

This sequence belongs to the nitrobindin family. As to quaternary structure, homodimer. The cofactor is heme b.

The enzyme catalyses peroxynitrite = nitrate. Its pathway is nitrogen metabolism. Functionally, heme-binding protein able to scavenge peroxynitrite and to protect free L-tyrosine against peroxynitrite-mediated nitration, by acting as a peroxynitrite isomerase that converts peroxynitrite to nitrate. Therefore, this protein likely plays a role in peroxynitrite sensing and in the detoxification of reactive nitrogen and oxygen species (RNS and ROS, respectively). Is able to bind nitric oxide (NO) in vitro, but may act as a sensor of peroxynitrite levels in vivo. This is Peroxynitrite isomerase from Clavibacter michiganensis subsp. michiganensis (strain NCPPB 382).